The following is a 341-amino-acid chain: Methionine import ATP-binding protein MetN (341 aa).

The ABC transporter domain occupies 2-237; it reads IELCGLKKSF…PESLARKMLY (236 aa). 34-41 provides a ligand contact to ATP; that stretch reads GKSGAGKS.

It belongs to the ABC transporter superfamily. Methionine importer (TC 3.A.1.24) family. As to quaternary structure, the complex is composed of two ATP-binding proteins (MetN), two transmembrane proteins (MetI) and a solute-binding protein (MetQ).

It is found in the cell inner membrane. It carries out the reaction L-methionine(out) + ATP + H2O = L-methionine(in) + ADP + phosphate + H(+). The enzyme catalyses D-methionine(out) + ATP + H2O = D-methionine(in) + ADP + phosphate + H(+). In terms of biological role, part of the ABC transporter complex MetNIQ involved in methionine import. Responsible for energy coupling to the transport system. In Legionella pneumophila (strain Paris), this protein is Methionine import ATP-binding protein MetN.